We begin with the raw amino-acid sequence, 259 residues long: MGTASRAGIASARRIVVKVGSSSISGENAGQIAPLVDAIAAAHARGAEVVLVSSGAIATGMPFLRLDDRPADLATQQAAAAVGQSVLIFRYQESLDRYGIVAGQVLLTAGDLAAPDHRENAQRAMERLLGLRLLPVVNENDTVATHEIRFGDNDRLAALVARLVDADLLLLLSDVDALYSRPPEEPGARRIEHVAFGDELEGVEIGSTGTGVGTGGAVTKVAAARLAAEAGTGVLLTSTAQVAEALAGAHVGTWFAPRS.

Lysine 18 contributes to the ATP binding site. Residues serine 54, aspartate 141, and asparagine 153 each contribute to the substrate site. Residue 173 to 174 (SD) coordinates ATP.

This sequence belongs to the glutamate 5-kinase family.

Its subcellular location is the cytoplasm. The enzyme catalyses L-glutamate + ATP = L-glutamyl 5-phosphate + ADP. Its pathway is amino-acid biosynthesis; L-proline biosynthesis; L-glutamate 5-semialdehyde from L-glutamate: step 1/2. Its function is as follows. Catalyzes the transfer of a phosphate group to glutamate to form L-glutamate 5-phosphate. In Clavibacter sepedonicus (Clavibacter michiganensis subsp. sepedonicus), this protein is Glutamate 5-kinase.